Reading from the N-terminus, the 163-residue chain is SsrA-binding protein (163 aa).

The span at 135 to 156 shows a compositional bias: basic and acidic residues; that stretch reads GKKEHDKRDDTKEREWKIEKSR. Residues 135-163 are disordered; the sequence is GKKEHDKRDDTKEREWKIEKSRTMKHAAR.

It belongs to the SmpB family.

The protein resides in the cytoplasm. Required for rescue of stalled ribosomes mediated by trans-translation. Binds to transfer-messenger RNA (tmRNA), required for stable association of tmRNA with ribosomes. tmRNA and SmpB together mimic tRNA shape, replacing the anticodon stem-loop with SmpB. tmRNA is encoded by the ssrA gene; the 2 termini fold to resemble tRNA(Ala) and it encodes a 'tag peptide', a short internal open reading frame. During trans-translation Ala-aminoacylated tmRNA acts like a tRNA, entering the A-site of stalled ribosomes, displacing the stalled mRNA. The ribosome then switches to translate the ORF on the tmRNA; the nascent peptide is terminated with the 'tag peptide' encoded by the tmRNA and targeted for degradation. The ribosome is freed to recommence translation, which seems to be the essential function of trans-translation. The sequence is that of SsrA-binding protein from Shewanella loihica (strain ATCC BAA-1088 / PV-4).